A 336-amino-acid polypeptide reads, in one-letter code: MPKINLLLLCGGGGAEHDISLMSARFFESSLAKSDKFSVLKLVLDKHGHYHTEDGKLCDLTNRREIRFEDNSTPAWSVDYVIPCIHGFPGETGDIQSYFNLIQLPYFGCESEASSNCFNKITAKMWFSALGVPNTPYIFLHQLDDDAIKQTETAFDNWGSVFVKAASQGSSVGCYKVDVKANIANVLKDAFSYAPYVVVEQTIHARELEVAVYQYQGEVVATLPGEIICDSNTFYSFDEKYATNSKARTDVVADNLSPEISQLIRDYAVKAFKGMKLRHLSRIDFFLTADNQILLNEINTFPGLTPISMFPKMLQNHGHNFTEYLIDVIGQQVDLT.

The ATP-grasp domain maps to 124–330; the sequence is KMWFSALGVP…FTEYLIDVIG (207 aa). Position 154 to 209 (154 to 209) interacts with ATP; sequence AFDNWGSVFVKAASQGSSVGCYKVDVKANIANVLKDAFSYAPYVVVEQTIHARELE. 3 residues coordinate Mg(2+): Asp284, Glu297, and Asn299.

It belongs to the D-alanine--D-alanine ligase family. Mg(2+) is required as a cofactor. Requires Mn(2+) as cofactor.

Its subcellular location is the cytoplasm. The catalysed reaction is 2 D-alanine + ATP = D-alanyl-D-alanine + ADP + phosphate + H(+). It participates in cell wall biogenesis; peptidoglycan biosynthesis. Functionally, cell wall formation. The chain is D-alanine--D-alanine ligase from Shewanella frigidimarina (strain NCIMB 400).